Here is a 503-residue protein sequence, read N- to C-terminus: MTDLPAELERVHMVGIGGAGMSGIARILLARGGQVSGSDAKESRGVLALRARGAQVRIGHDAGALDLLPGGPTVVVTTHAAIPKDNPELVEAARRGIPVILRPAVLASLMQGHRTLLVSGTHGKTSTTSMLVVALQHCGFDPSFAVGGELNEAGTNAHHGSGDVFVAEADESDGSLLQYEPDVVVVTNVEADHLDYFGSTEAYIQVFDDFAARLSPGGLLVACLDDPGSAALAQRVAARGLPGVRVLGYGSAEDADGAFASVDGVEVGARLLSFEARDVGGVLQFQLAGEQSPRTVRMGVPGRHMALNALAALLAAREAGADVDEILEGIAGFGGVHRRFQFTGREHGVRVFDDYAHHPTEVRAVLGAAADLVRQPHEADRRESEDSVRSGKVIVVFQPHLYSRTATFAEEFGHALDLADEVVVLDVYGAREEPLPGVSGALVALSVSKPVHYQPDLSQAPRQVAALASPGDVVITMGAGDVTMLGNQILDALRAAPHHHPSR.

ATP is bound at residue 120 to 126 (GTHGKTS).

Belongs to the MurCDEF family.

It localises to the cytoplasm. It catalyses the reaction UDP-N-acetyl-alpha-D-muramate + L-alanine + ATP = UDP-N-acetyl-alpha-D-muramoyl-L-alanine + ADP + phosphate + H(+). It functions in the pathway cell wall biogenesis; peptidoglycan biosynthesis. Functionally, cell wall formation. This is UDP-N-acetylmuramate--L-alanine ligase from Rhodococcus jostii (strain RHA1).